The primary structure comprises 151 residues: uncharacterized protein (151 aa).

The disordered stretch occupies residues 1–77; that stretch reads MSLLGGMWKS…LGSNPISSSR (77 aa). 2 stretches are compositionally biased toward low complexity: residues 19 to 54 and 63 to 76; these read PKPS…RSSN and SISG…ISSS.

This is an uncharacterized protein from Methanothermobacter marburgensis (strain ATCC BAA-927 / DSM 2133 / JCM 14651 / NBRC 100331 / OCM 82 / Marburg) (Methanobacterium thermoautotrophicum).